Here is a 193-residue protein sequence, read N- to C-terminus: Phosphoheptose isomerase (193 aa).

The SIS domain maps to Leu37 to Ala193. Asn52–Gly54 provides a ligand contact to substrate. His61 and Glu65 together coordinate Zn(2+). Residues Glu65, Asn93–Asp94, Ser119–Ser121, Ser124, and Gln172 each bind substrate. Zn(2+) contacts are provided by Gln172 and His180.

The protein belongs to the SIS family. GmhA subfamily. Homotetramer. The cofactor is Zn(2+).

It localises to the cytoplasm. It catalyses the reaction 2 D-sedoheptulose 7-phosphate = D-glycero-alpha-D-manno-heptose 7-phosphate + D-glycero-beta-D-manno-heptose 7-phosphate. It functions in the pathway carbohydrate biosynthesis; D-glycero-D-manno-heptose 7-phosphate biosynthesis; D-glycero-alpha-D-manno-heptose 7-phosphate and D-glycero-beta-D-manno-heptose 7-phosphate from sedoheptulose 7-phosphate: step 1/1. Functionally, catalyzes the isomerization of sedoheptulose 7-phosphate in D-glycero-D-manno-heptose 7-phosphate. This Yersinia enterocolitica serotype O:8 / biotype 1B (strain NCTC 13174 / 8081) protein is Phosphoheptose isomerase.